Reading from the N-terminus, the 241-residue chain is ATP synthase subunit a (241 aa).

Transmembrane regions (helical) follow at residues 30-50, 89-109, 128-148, 193-213, and 214-234; these read GQIF…VLVG, LPFI…GALI, INTT…AGLS, LAVG…VMLL, and GLFT…FYIG.

Belongs to the ATPase A chain family. F-type ATPases have 2 components, CF(1) - the catalytic core - and CF(0) - the membrane proton channel. CF(1) has five subunits: alpha(3), beta(3), gamma(1), delta(1), epsilon(1). CF(0) has four main subunits: a, b, b' and c.

It is found in the cellular thylakoid membrane. Its function is as follows. Key component of the proton channel; it plays a direct role in the translocation of protons across the membrane. The chain is ATP synthase subunit a from Synechococcus sp. (strain CC9311).